The chain runs to 176 residues: Large ribosomal subunit protein uL10 (176 aa).

This sequence belongs to the universal ribosomal protein uL10 family. Part of the ribosomal stalk of the 50S ribosomal subunit. The N-terminus interacts with L11 and the large rRNA to form the base of the stalk. The C-terminus forms an elongated spine to which L12 dimers bind in a sequential fashion forming a multimeric L10(L12)X complex.

Forms part of the ribosomal stalk, playing a central role in the interaction of the ribosome with GTP-bound translation factors. The sequence is that of Large ribosomal subunit protein uL10 from Mycobacteroides abscessus (strain ATCC 19977 / DSM 44196 / CCUG 20993 / CIP 104536 / JCM 13569 / NCTC 13031 / TMC 1543 / L948) (Mycobacterium abscessus).